Here is a 183-residue protein sequence, read N- to C-terminus: Thymidine kinase (183 aa).

11 to 18 provides a ligand contact to ATP; the sequence is GPMFSGKT. Residue glutamate 89 is the Proton acceptor of the active site. Residue phenylalanine 119 coordinates substrate. Cysteine 144 and cysteine 147 together coordinate Zn(2+). Residue 163 to 167 coordinates substrate; the sequence is VMDIG. The Zn(2+) site is built by cysteine 176 and cysteine 179.

This sequence belongs to the thymidine kinase family.

It catalyses the reaction thymidine + ATP = dTMP + ADP + H(+). This chain is Thymidine kinase (TK), found in Vertebrata (FPV).